We begin with the raw amino-acid sequence, 124 residues long: Fluoride-specific ion channel FluC (124 aa).

4 helical membrane passes run 1 to 21, 38 to 58, 69 to 89, and 97 to 117; these read MIPLILAVSAGGVAGTLLRFA, TLAVNIVGCLLIGVLYGLFLV, GLIVGFLGGLTTFSSFSLDTV, and VALALGYAALSVFGGLLATWA. 2 residues coordinate Na(+): Gly-76 and Thr-79.

Belongs to the fluoride channel Fluc/FEX (TC 1.A.43) family.

The protein localises to the cell inner membrane. It catalyses the reaction fluoride(in) = fluoride(out). Na(+) is not transported, but it plays an essential structural role and its presence is essential for fluoride channel function. In terms of biological role, fluoride-specific ion channel. Important for reducing fluoride concentration in the cell, thus reducing its toxicity. The sequence is that of Fluoride-specific ion channel FluC from Pseudomonas fluorescens (strain ATCC BAA-477 / NRRL B-23932 / Pf-5).